The chain runs to 920 residues: Isoleucine--tRNA ligase (920 aa).

The 'HIGH' region signature appears at 57-67 (PYANGDIHLGH). Position 560 (Glu560) interacts with L-isoleucyl-5'-AMP. The short motif at 601–605 (KMSKS) is the 'KMSKS' region element. Lys604 serves as a coordination point for ATP. Residues Cys890, Cys893, Cys910, and Cys913 each contribute to the Zn(2+) site.

Belongs to the class-I aminoacyl-tRNA synthetase family. IleS type 1 subfamily. In terms of assembly, monomer. Zn(2+) is required as a cofactor.

Its subcellular location is the cytoplasm. The catalysed reaction is tRNA(Ile) + L-isoleucine + ATP = L-isoleucyl-tRNA(Ile) + AMP + diphosphate. Catalyzes the attachment of isoleucine to tRNA(Ile). As IleRS can inadvertently accommodate and process structurally similar amino acids such as valine, to avoid such errors it has two additional distinct tRNA(Ile)-dependent editing activities. One activity is designated as 'pretransfer' editing and involves the hydrolysis of activated Val-AMP. The other activity is designated 'posttransfer' editing and involves deacylation of mischarged Val-tRNA(Ile). This chain is Isoleucine--tRNA ligase, found in Caldicellulosiruptor bescii (strain ATCC BAA-1888 / DSM 6725 / KCTC 15123 / Z-1320) (Anaerocellum thermophilum).